Here is a 241-residue protein sequence, read N- to C-terminus: Beta-nerve growth factor (241 aa).

The first 18 residues, 1-18, serve as a signal peptide directing secretion; sequence MSMLFYTLITAFLIGVQA. A propeptide spanning residues 19–121 is cleaved from the precursor; the sequence is EPYTDSNVPE…SFNRTHRSKR (103 aa). N69, N114, and N166 each carry an N-linked (GlcNAc...) asparagine glycan. Cystine bridges form between C136/C201, C179/C229, and C189/C231. Positions 173 and 209 each coordinate a 1-acyl-sn-glycero-3-phospho-(1D-myo-inositol). K209 is a binding site for a 1-acyl-sn-glycero-3-phospho-L-serine.

The protein belongs to the NGF-beta family. Homodimer. The homodimer interacts with a single NTRK1 chain. The homodimer interacts with a single NGFR chain. The NGF dimer interacts with a single SORCS2 chain (via extracellular domain). The NGF precursor (proNGF) binds to a receptor complex formed by SORT1 and NGFR, which leads to NGF endocytosis. Both mature NGF and the immature NGF precursor (proNGF) interact with SORCS2 and with the heterodimer formed by SORCS2 and NGFR (via extracellular domains). The NGF precursor (proNGF) has much higher affinity for SORCS2 than mature NGF. The NGF precursor (proNGF) has much higher affinity for SORT1 than mature NGF. Interacts with ADAM10 in a divalent cation-dependent manner. Interacts with SORCS3. Detected in the granule and pyramidal cell layer in the hippocampus.

It localises to the secreted. The protein resides in the endosome lumen. Its function is as follows. Nerve growth factor is important for the development and maintenance of the sympathetic and sensory nervous systems. Extracellular ligand for the NTRK1 and NGFR receptors, activates cellular signaling cascades to regulate neuronal proliferation, differentiation and survival. The immature NGF precursor (proNGF) functions as a ligand for the heterodimeric receptor formed by SORCS2 and NGFR, and activates cellular signaling cascades that lead to inactivation of RAC1 and/or RAC2, reorganization of the actin cytoskeleton and neuronal growth cone collapse. In contrast to mature NGF, the precursor form (proNGF) promotes neuronal apoptosis (in vitro). Inhibits metalloproteinase-dependent proteolysis of platelet glycoprotein VI. Binds lysophosphatidylinositol and lysophosphatidylserine between the two chains of the homodimer. The lipid-bound form promotes histamine relase from mast cells, contrary to the lipid-free form. In Rattus norvegicus (Rat), this protein is Beta-nerve growth factor (Ngf).